The following is an 833-amino-acid chain: Leucine--tRNA ligase (833 aa).

The short motif at 41 to 52 (PYPSGAGLHVGH) is the 'HIGH' region element. The 'KMSKS' region motif lies at 610-614 (KMSKS). Lys613 serves as a coordination point for ATP.

Belongs to the class-I aminoacyl-tRNA synthetase family.

Its subcellular location is the cytoplasm. It carries out the reaction tRNA(Leu) + L-leucine + ATP = L-leucyl-tRNA(Leu) + AMP + diphosphate. The protein is Leucine--tRNA ligase of Streptococcus pyogenes serotype M3 (strain ATCC BAA-595 / MGAS315).